A 357-amino-acid chain; its full sequence is Peptide chain release factor 1 (357 aa).

Gln-234 is modified (N5-methylglutamine).

Belongs to the prokaryotic/mitochondrial release factor family. Post-translationally, methylated by PrmC. Methylation increases the termination efficiency of RF1.

It is found in the cytoplasm. In terms of biological role, peptide chain release factor 1 directs the termination of translation in response to the peptide chain termination codons UAG and UAA. This is Peptide chain release factor 1 (prfA) from Lactococcus lactis subsp. lactis (strain IL1403) (Streptococcus lactis).